A 308-amino-acid polypeptide reads, in one-letter code: Ribosomal RNA small subunit methyltransferase H (308 aa).

S-adenosyl-L-methionine is bound by residues G33–H35, D52, Y81, D99, and Q106.

Belongs to the methyltransferase superfamily. RsmH family.

Its subcellular location is the cytoplasm. The enzyme catalyses cytidine(1402) in 16S rRNA + S-adenosyl-L-methionine = N(4)-methylcytidine(1402) in 16S rRNA + S-adenosyl-L-homocysteine + H(+). Functionally, specifically methylates the N4 position of cytidine in position 1402 (C1402) of 16S rRNA. This chain is Ribosomal RNA small subunit methyltransferase H, found in Francisella philomiragia subsp. philomiragia (strain ATCC 25017 / CCUG 19701 / FSC 153 / O#319-036).